The sequence spans 808 residues: Protein NLP5 (808 aa).

Residues 56 to 68 show a composition bias toward polar residues; it reads PTQDTSNSLSQMY. The segment at 56-83 is disordered; it reads PTQDTSNSLSQMYGQDCPERSSLEDQNQ. The region spanning 536-617 is the RWP-RK domain; that stretch reads NRVTEKKRTK…IDSVEGVSGH (82 aa). Residues 660–680 are disordered; sequence SPGSSCSHSSSCSSETQVIKE. Low complexity predominate over residues 663–673; that stretch reads SSCSHSSSCSS. The region spanning 710 to 793 is the PB1 domain; it reads FLRVKVSYEE…QTIKLLLQLS (84 aa).

The protein resides in the nucleus. Probable transcription factor. The sequence is that of Protein NLP5 (NLP5) from Arabidopsis thaliana (Mouse-ear cress).